The following is a 721-amino-acid chain: Polyribonucleotide nucleotidyltransferase (721 aa).

Mg(2+)-binding residues include aspartate 495 and aspartate 501. Positions 562–621 constitute a KH domain; it reads PRLLSFRIDPELIGTVIGPGGRTIKGITERTNTKIDIEDGGIVTIASHDGAAAEEAQKII. In terms of domain architecture, S1 motif spans 631 to 699; it reads GEIFPGVVTR…SRGRINLTLR (69 aa). Positions 702-721 are disordered; that stretch reads GQNGGMSYPEPTPTPVAPLS. Over residues 711–721 the composition is skewed to pro residues; it reads EPTPTPVAPLS.

It belongs to the polyribonucleotide nucleotidyltransferase family. It depends on Mg(2+) as a cofactor.

Its subcellular location is the cytoplasm. It carries out the reaction RNA(n+1) + phosphate = RNA(n) + a ribonucleoside 5'-diphosphate. In terms of biological role, involved in mRNA degradation. Catalyzes the phosphorolysis of single-stranded polyribonucleotides processively in the 3'- to 5'-direction. The protein is Polyribonucleotide nucleotidyltransferase of Prochlorococcus marinus (strain MIT 9301).